The primary structure comprises 348 residues: Histidinol-phosphate aminotransferase (348 aa).

An N6-(pyridoxal phosphate)lysine modification is found at K210.

Belongs to the class-II pyridoxal-phosphate-dependent aminotransferase family. Histidinol-phosphate aminotransferase subfamily. Homodimer. Pyridoxal 5'-phosphate is required as a cofactor.

The enzyme catalyses L-histidinol phosphate + 2-oxoglutarate = 3-(imidazol-4-yl)-2-oxopropyl phosphate + L-glutamate. It participates in amino-acid biosynthesis; L-histidine biosynthesis; L-histidine from 5-phospho-alpha-D-ribose 1-diphosphate: step 7/9. The chain is Histidinol-phosphate aminotransferase from Pseudomonas putida (strain ATCC 700007 / DSM 6899 / JCM 31910 / BCRC 17059 / LMG 24140 / F1).